The chain runs to 413 residues: Porin PorA (413 aa).

An N-terminal signal peptide occupies residues 1 to 22 (MKKVVSSLLIILGAAMLIFAIA). Residues 265–288 (TKSAADSKDDKKKDGDKKDEKSPE) are disordered.

It belongs to the PorA family.

It localises to the secreted. The protein localises to the cell wall. Functionally, forms water-filled channels that favor the permeation of cations. The protein is Porin PorA of Corynebacterium resistens (strain DSM 45100 / JCM 12819 / GTC 2026 / SICGH 158).